The sequence spans 245 residues: Probable phosphatase YcdX (245 aa).

Residues His7, His9, His15, His40, Glu73, His101, His131, Asp192, and His194 each coordinate Zn(2+).

The protein belongs to the PHP family. As to quaternary structure, homotrimer. The cofactor is Zn(2+).

This chain is Probable phosphatase YcdX, found in Escherichia fergusonii (strain ATCC 35469 / DSM 13698 / CCUG 18766 / IAM 14443 / JCM 21226 / LMG 7866 / NBRC 102419 / NCTC 12128 / CDC 0568-73).